The sequence spans 319 residues: Coproporphyrin III ferrochelatase 2 (319 aa).

Residues Tyr13, Arg30, 46 to 47 (RY), Ser54, and Tyr125 contribute to the Fe-coproporphyrin III site. Residues His181 and Glu262 each contribute to the Fe(2+) site.

This sequence belongs to the ferrochelatase family.

The protein resides in the cytoplasm. The catalysed reaction is Fe-coproporphyrin III + 2 H(+) = coproporphyrin III + Fe(2+). It functions in the pathway porphyrin-containing compound metabolism; protoheme biosynthesis. Its function is as follows. Involved in coproporphyrin-dependent heme b biosynthesis. Catalyzes the insertion of ferrous iron into coproporphyrin III to form Fe-coproporphyrin III. This is Coproporphyrin III ferrochelatase 2 from Bacillus thuringiensis subsp. konkukian (strain 97-27).